Here is a 377-residue protein sequence, read N- to C-terminus: Nitric oxide reductase FlRd-NAD(+) reductase (377 aa).

Belongs to the FAD-dependent oxidoreductase family. The cofactor is FAD.

The protein resides in the cytoplasm. The catalysed reaction is 2 reduced [nitric oxide reductase rubredoxin domain] + NAD(+) + H(+) = 2 oxidized [nitric oxide reductase rubredoxin domain] + NADH. It participates in nitrogen metabolism; nitric oxide reduction. One of at least two accessory proteins for anaerobic nitric oxide (NO) reductase. Reduces the rubredoxin moiety of NO reductase. This is Nitric oxide reductase FlRd-NAD(+) reductase from Salmonella gallinarum (strain 287/91 / NCTC 13346).